Consider the following 255-residue polypeptide: Probable transcriptional regulatory protein Rcas_0718 (255 aa).

It belongs to the TACO1 family.

The protein resides in the cytoplasm. The sequence is that of Probable transcriptional regulatory protein Rcas_0718 from Roseiflexus castenholzii (strain DSM 13941 / HLO8).